The sequence spans 690 residues: Calpain-9 (690 aa).

The segment at 1-24 (MPYLHRSLRPQPQPVPRDARTVHS) is disordered. One can recognise a Calpain catalytic domain in the interval 42 to 337 (LFEDADFPAS…FDKVEICNLT (296 aa)). Residues Leu-81, Gly-83, and Asp-88 each contribute to the Ca(2+) site. The active site involves Cys-97. Glu-167 is a Ca(2+) binding site. Residues His-254 and Asn-278 contribute to the active site. Ca(2+)-binding residues include Glu-284, Asp-291, Leu-312, Asp-314, and Glu-316. Positions 338–521 (PDALEDNTLH…PQEEETEEER (184 aa)) are domain III. A domain IV region spans residues 522–690 (QFRALFRRIA…NEFINLTMNI (169 aa)). 3 consecutive EF-hand domains span residues 534–552 (DMEV…VLQK), 561–589 (LSLL…FRVF), and 591–626 (DKLR…AGFQ). Ca(2+)-binding residues include Asp-574, Ser-576, Asn-578, Lys-580, Glu-585, Asp-604, Asp-606, Ser-608, Thr-610, and Glu-615.

It belongs to the peptidase C2 family. As to expression, predominantly expressed in stomach and small intestine, although low levels of expression in other organs.

In terms of biological role, calcium-regulated non-lysosomal thiol-protease. This is Calpain-9 (Capn9) from Rattus norvegicus (Rat).